The following is a 346-amino-acid chain: tRNA N6-adenosine threonylcarbamoyltransferase (346 aa).

Positions 111 and 115 each coordinate Fe cation. Residues 134–138 (LVSGG), Asp167, Gly180, and Asn277 contribute to the substrate site. Residue Asp305 participates in Fe cation binding.

It belongs to the KAE1 / TsaD family. Requires Fe(2+) as cofactor.

The protein localises to the cytoplasm. It catalyses the reaction L-threonylcarbamoyladenylate + adenosine(37) in tRNA = N(6)-L-threonylcarbamoyladenosine(37) in tRNA + AMP + H(+). Required for the formation of a threonylcarbamoyl group on adenosine at position 37 (t(6)A37) in tRNAs that read codons beginning with adenine. Is involved in the transfer of the threonylcarbamoyl moiety of threonylcarbamoyl-AMP (TC-AMP) to the N6 group of A37, together with TsaE and TsaB. TsaD likely plays a direct catalytic role in this reaction. This is tRNA N6-adenosine threonylcarbamoyltransferase from Bordetella bronchiseptica (strain ATCC BAA-588 / NCTC 13252 / RB50) (Alcaligenes bronchisepticus).